A 393-amino-acid polypeptide reads, in one-letter code: MSIKTVKDFNSFAGKRALVRCDFNVPLKEGNISDDTRIKAALPTIEYLKEKGARIVLISHLGRPEGKKNLKYSLKPVANKLSELLGQDVKMLSDCIGREIVNNTLQMKDGDVVLLENVRFYAEEEKNDKNFAKKLSENGDVFVNDAFGAAHRAHASTVGVSDYLPSVGGFLMEKEDKFLGEVLKNPERPFVSIIGGSKVSSKIAVLESLLSKSNVVVIGGGMAYTFLHSKGYSIGKSLLESEYIDIASSFLKKAKELDVKVILPLDHIVADDFNKNSTPEYIDSFDIPENKIGMDVGGKTLKEIEKVIKTAKTIIWNGPLGVFEFDSFSKGTAMVAEMVASCAGLTIVGGGDSVAAVNKFNLSDKITHVSTGGGASLEYLEGKILPGIKVLEK.

Substrate-binding positions include 22–24 (DFN), R37, 60–63 (HLGR), R119, and R152. Residues K202, G293, E324, and 350–353 (GGDS) contribute to the ATP site.

This sequence belongs to the phosphoglycerate kinase family. In terms of assembly, monomer.

Its subcellular location is the cytoplasm. It catalyses the reaction (2R)-3-phosphoglycerate + ATP = (2R)-3-phospho-glyceroyl phosphate + ADP. It participates in carbohydrate degradation; glycolysis; pyruvate from D-glyceraldehyde 3-phosphate: step 2/5. The chain is Phosphoglycerate kinase from Borrelia garinii subsp. bavariensis (strain ATCC BAA-2496 / DSM 23469 / PBi) (Borreliella bavariensis).